The chain runs to 626 residues: Basic helix-loop-helix ARNT-like protein 1 (626 aa).

A disordered region spans residues 1 to 58; sequence MADQRMDISSTISDFMSPGPTDLLSGSLSTSGVDCNRKRKGSATDYQESMDTDKDDPH. Residue Ser17 is modified to Phosphoserine; by GSK3-beta. Residues 17–32 are compositionally biased toward low complexity; the sequence is SPGPTDLLSGSLSTSG. A Phosphothreonine; by GSK3-beta modification is found at Thr21. A Nuclear localization signal motif is present at residues 36-41; that stretch reads NRKRKG. Residues 72 to 125 enclose the bHLH domain; sequence NAREAHSQIEKRRRDKMNSFIDELASLVPTCNAMSRKLDKLTVLRMAVQHMKTL. Residue Ser78 is modified to Phosphoserine. A Phosphoserine; by CK2 modification is found at Ser90. The Nuclear export signal 1 motif lies at 142-152; sequence LSDDELKHLIL. The PAS 1 domain occupies 143 to 215; the sequence is SDDELKHLIL…EQLSSSDTAP (73 aa). Lys252 is covalently cross-linked (Glycyl lysine isopeptide (Lys-Gly) (interchain with G-Cter in SUMO2 and SUMO3)). Lys259 participates in a covalent cross-link: Glycyl lysine isopeptide (Lys-Gly) (interchain with G-Cter in SUMO); alternate. A Glycyl lysine isopeptide (Lys-Gly) (interchain with G-Cter in SUMO2); alternate cross-link involves residue Lys259. The PAS 2 domain maps to 326-396; that stretch reads PQPVNGEIRV…ECHRQVLQTR (71 aa). Residues 361-369 carry the Nuclear export signal 2 motif; the sequence is LAYLPQELL. In terms of domain architecture, PAC spans 401–444; that stretch reads TNCYKFKIKDGSFITLRSRWFSFMNPWTKEVEYIVSTNTVVLAN. Disordered regions lie at residues 459–492 and 511–595; these read SPHS…RAGA and GSSP…SPSN. Residues 508 to 588 are interaction with CIART; it reads RIRGSSPSSC…IGIDMIDNDQ (81 aa). Low complexity predominate over residues 511–521; it reads GSSPSSCGSSP. Lys538 is subject to N6-acetyllysine.

In terms of assembly, component of the circadian clock oscillator which includes the CRY1/2 proteins, CLOCK or NPAS2, BMAL1 or BMAL2, CSNK1D and/or CSNK1E, TIMELESS and the PER1/2/3 proteins. Forms a heterodimer with CLOCK. The CLOCK-BMAL1 heterodimer is required for E-box-dependent transactivation, for CLOCK nuclear translocation and degradation, and, for phosphorylation of both CLOCK and BMAL1. Part of a nuclear complex which also includes RACK1 and PRKCA; RACK1 and PRKCA are recruited to the complex in a circadian manner. Interacts with NPAS2. Interacts with EZH2. Interacts with SUMO3. Interacts with SIRT1. Interacts with AHR. Interacts with ID1, ID2 and ID3. Interacts with DDX4. Interacts with OGT. Interacts with EED and SUZ12. Interacts with MTA1. Interacts with CIART. Interacts with HSP90. Interacts with KAT2B and EP300. Interacts with BHLHE40/DEC1 and BHLHE41/DEC2. Interacts with RELB and the interaction is enhanced in the presence of CLOCK. Interacts with PER1, PER2, CRY1 and CRY2 and this interaction requires a translocation to the nucleus. Interaction of the CLOCK-BMAL1 heterodimer with PER or CRY inhibits transcription activation. Interaction of the CLOCK-BMAL1 with CRY1 is independent of DNA but with PER2 is off DNA. The CLOCK-BMAL1 heterodimer interacts with GSK3B. Interacts with KDM5A. Interacts with KMT2A; in a circadian manner. Interacts with UBE3A. Interacts with PRKCG. Interacts with MAGEL2. Interacts with NCOA2. Interacts with THRAP3. The CLOCK-BMAL1 heterodimer interacts with PASD1. Interacts with PASD1. Interacts with USP9X. Interacts with PIWIL2 (via PIWI domain). Interacts with HDAC3. Interacts with HNF4A. Ubiquitinated, leading to its proteasomal degradation. Deubiquitinated by USP9X. Post-translationally, O-glycosylated; contains O-GlcNAc. O-glycosylation by OGT prevents protein degradation by inhibiting ubiquitination. It also stabilizes the CLOCK-BMAL1 heterodimer thereby increasing CLOCK-BMAL1-mediated transcription of genes in the negative loop of the circadian clock such as PER1/2/3 and CRY1/2. In terms of processing, acetylated on Lys-538 by CLOCK during the repression phase of the circadian cycle. Acetylation facilitates recruitment of CRY1 protein and initiates the repression phase of the circadian cycle. Acetylated at Lys-538 by KAT5 during the activation phase of the cycle, leading to recruitment of the positive transcription elongation factor b (P-TEFb) and BRD4, followed by productive elongation of circadian transcripts. Deacetylated by SIRT1, which may result in decreased protein stability. Phosphorylated upon dimerization with CLOCK. Phosphorylation enhances the transcriptional activity, alters the subcellular localization and decreases the stability of the CLOCK-BMAL1 heterodimer by promoting its degradation. Phosphorylation shows circadian variations in the liver with a peak between CT10 to CT14. Phosphorylation at Ser-90 by CK2 is essential for its nuclear localization, its interaction with CLOCK and controls CLOCK nuclear entry. Dephosphorylation at Ser-78 is important for dimerization with CLOCK and transcriptional activity. Post-translationally, sumoylated on Lys-259 upon dimerization with CLOCK. Predominantly conjugated to poly-SUMO2/3 rather than SUMO1 and the level of these conjugates undergo rhythmic variation, peaking at CT9-CT12. Sumoylation localizes it exclusively to the PML body and promotes its ubiquitination in the PML body, ubiquitin-dependent proteasomal degradation and the transcriptional activity of the CLOCK-BMAL1 heterodimer. In terms of processing, undergoes lysosome-mediated degradation in a time-dependent manner in the liver.

Its subcellular location is the nucleus. It localises to the cytoplasm. The protein localises to the PML body. Functionally, transcriptional activator which forms a core component of the circadian clock. The circadian clock, an internal time-keeping system, regulates various physiological processes through the generation of approximately 24 hour circadian rhythms in gene expression, which are translated into rhythms in metabolism and behavior. It is derived from the Latin roots 'circa' (about) and 'diem' (day) and acts as an important regulator of a wide array of physiological functions including metabolism, sleep, body temperature, blood pressure, endocrine, immune, cardiovascular, and renal function. Consists of two major components: the central clock, residing in the suprachiasmatic nucleus (SCN) of the brain, and the peripheral clocks that are present in nearly every tissue and organ system. Both the central and peripheral clocks can be reset by environmental cues, also known as Zeitgebers (German for 'timegivers'). The predominant Zeitgeber for the central clock is light, which is sensed by retina and signals directly to the SCN. The central clock entrains the peripheral clocks through neuronal and hormonal signals, body temperature and feeding-related cues, aligning all clocks with the external light/dark cycle. Circadian rhythms allow an organism to achieve temporal homeostasis with its environment at the molecular level by regulating gene expression to create a peak of protein expression once every 24 hours to control when a particular physiological process is most active with respect to the solar day. Transcription and translation of core clock components (CLOCK, NPAS2, BMAL1, BMAL2, PER1, PER2, PER3, CRY1 and CRY2) plays a critical role in rhythm generation, whereas delays imposed by post-translational modifications (PTMs) are important for determining the period (tau) of the rhythms (tau refers to the period of a rhythm and is the length, in time, of one complete cycle). A diurnal rhythm is synchronized with the day/night cycle, while the ultradian and infradian rhythms have a period shorter and longer than 24 hours, respectively. Disruptions in the circadian rhythms contribute to the pathology of cardiovascular diseases, cancer, metabolic syndromes and aging. A transcription/translation feedback loop (TTFL) forms the core of the molecular circadian clock mechanism. Transcription factors, CLOCK or NPAS2 and BMAL1 or BMAL2, form the positive limb of the feedback loop, act in the form of a heterodimer and activate the transcription of core clock genes and clock-controlled genes (involved in key metabolic processes), harboring E-box elements (5'-CACGTG-3') within their promoters. The core clock genes: PER1/2/3 and CRY1/2 which are transcriptional repressors form the negative limb of the feedback loop and interact with the CLOCK|NPAS2-BMAL1|BMAL2 heterodimer inhibiting its activity and thereby negatively regulating their own expression. This heterodimer also activates nuclear receptors NR1D1/2 and RORA/B/G, which form a second feedback loop and which activate and repress BMAL1 transcription, respectively. BMAL1 positively regulates myogenesis and negatively regulates adipogenesis via the transcriptional control of the genes of the canonical Wnt signaling pathway. Plays a role in normal pancreatic beta-cell function; regulates glucose-stimulated insulin secretion via the regulation of antioxidant genes NFE2L2/NRF2 and its targets SESN2, PRDX3, CCLC and CCLM. Negatively regulates the mTORC1 signaling pathway; regulates the expression of MTOR and DEPTOR. Controls diurnal oscillations of Ly6C inflammatory monocytes; rhythmic recruitment of the PRC2 complex imparts diurnal variation to chemokine expression that is necessary to sustain Ly6C monocyte rhythms. Regulates the expression of HSD3B2, STAR, PTGS2, CYP11A1, CYP19A1 and LHCGR in the ovary and also the genes involved in hair growth. Plays an important role in adult hippocampal neurogenesis by regulating the timely entry of neural stem/progenitor cells (NSPCs) into the cell cycle and the number of cell divisions that take place prior to cell-cycle exit. Regulates the circadian expression of CIART and KLF11. The CLOCK-BMAL1 heterodimer regulates the circadian expression of SERPINE1/PAI1, VWF, B3, CCRN4L/NOC, NAMPT, DBP, MYOD1, PPARGC1A, PPARGC1B, SIRT1, GYS2, F7, NGFR, GNRHR, BHLHE40/DEC1, ATF4, MTA1, KLF10 and also genes implicated in glucose and lipid metabolism. Promotes rhythmic chromatin opening, regulating the DNA accessibility of other transcription factors. May play a role in spermatogenesis; contributes to the chromatoid body assembly and physiology. The NPAS2-BMAL1 heterodimer positively regulates the expression of MAOA, F7 and LDHA and modulates the circadian rhythm of daytime contrast sensitivity by regulating the rhythmic expression of adenylate cyclase type 1 (ADCY1) in the retina. The preferred binding motif for the CLOCK-BMAL1 heterodimer is 5'-CACGTGA-3', which contains a flanking adenine nucleotide at the 3-prime end of the canonical 6-nucleotide E-box sequence. CLOCK specifically binds to the half-site 5'-CAC-3', while BMAL1 binds to the half-site 5'-GTGA-3'. The CLOCK-BMAL1 heterodimer also recognizes the non-canonical E-box motifs 5'-AACGTGA-3' and 5'-CATGTGA-3'. Essential for the rhythmic interaction of CLOCK with ASS1 and plays a critical role in positively regulating CLOCK-mediated acetylation of ASS1. Plays a role in protecting against lethal sepsis by limiting the expression of immune checkpoint protein CD274 in macrophages in a PKM2-dependent manner. Regulates the diurnal rhythms of skeletal muscle metabolism via transcriptional activation of genes promoting triglyceride synthesis (DGAT2) and metabolic efficiency (COQ10B). The chain is Basic helix-loop-helix ARNT-like protein 1 from Rattus norvegicus (Rat).